Reading from the N-terminus, the 406-residue chain is Solanesyl diphosphate synthase 1, chloroplastic (406 aa).

A chloroplast-targeting transit peptide spans 1–71; sequence MMTSCRNIDL…NGIGQSQTVS (71 aa). The isopentenyl diphosphate site is built by Lys126, Arg129, and His164. The Mg(2+) site is built by Asp171 and Asp175. An all-trans-polyprenyl diphosphate is bound at residue Arg180. Arg181 lines the isopentenyl diphosphate pocket. An all-trans-polyprenyl diphosphate is bound by residues Lys257, Thr258, Gln295, and Lys312.

It belongs to the FPP/GGPP synthase family. In terms of assembly, homodimer. Interacts with FBN5. It depends on Mg(2+) as a cofactor. Higher expression in leaves than in roots.

It localises to the plastid. It is found in the chloroplast. It carries out the reaction 5 isopentenyl diphosphate + (2E,6E,10E)-geranylgeranyl diphosphate = all-trans-nonaprenyl diphosphate + 5 diphosphate. The enzyme catalyses isopentenyl diphosphate + (2E,6E)-farnesyl diphosphate = (2E,6E,10E)-geranylgeranyl diphosphate + diphosphate. Involved in providing solanesyl diphosphate for plastoquinone-9 (PQ-9) formation in plastids. Catalyzes the elongation of the prenyl side chain of PQ-9 in plastids. Contributes to the biosynthesis of plastochromanol-8 (PC-8) in plastids. Does not contribute to the synthesis of tocopherol or ubiquinone. PQ-9 and PC-8 are lipophilic antioxidants that act as protectant against photooxidative stress under high light stress conditions. Prefers geranylgeranyl diphosphate to farnesyl diphosphate as substrate. No activity with geranyl diphosphate or dimethylallyl diphosphate as substrate. The chain is Solanesyl diphosphate synthase 1, chloroplastic from Arabidopsis thaliana (Mouse-ear cress).